A 438-amino-acid chain; its full sequence is Trigger factor (438 aa).

The PPIase FKBP-type domain occupies 162-247; the sequence is GDIVTIDFEG…VKDIKVKELP (86 aa).

The protein belongs to the FKBP-type PPIase family. Tig subfamily.

The protein resides in the cytoplasm. The catalysed reaction is [protein]-peptidylproline (omega=180) = [protein]-peptidylproline (omega=0). Its function is as follows. Involved in protein export. Acts as a chaperone by maintaining the newly synthesized protein in an open conformation. Functions as a peptidyl-prolyl cis-trans isomerase. The chain is Trigger factor from Caldicellulosiruptor bescii (strain ATCC BAA-1888 / DSM 6725 / KCTC 15123 / Z-1320) (Anaerocellum thermophilum).